A 76-amino-acid chain; its full sequence is Sec-independent protein translocase protein TatA (76 aa).

The chain crosses the membrane as a helical span at residues Met-1–Gly-21. The tract at residues Met-43–Ala-76 is disordered. Over residues Asn-64–Ala-76 the composition is skewed to basic and acidic residues.

This sequence belongs to the TatA/E family. In terms of assembly, the Tat system comprises two distinct complexes: a TatABC complex, containing multiple copies of TatA, TatB and TatC subunits, and a separate TatA complex, containing only TatA subunits. Substrates initially bind to the TatABC complex, which probably triggers association of the separate TatA complex to form the active translocon.

It localises to the cell inner membrane. Its function is as follows. Part of the twin-arginine translocation (Tat) system that transports large folded proteins containing a characteristic twin-arginine motif in their signal peptide across membranes. TatA could form the protein-conducting channel of the Tat system. This is Sec-independent protein translocase protein TatA from Burkholderia lata (strain ATCC 17760 / DSM 23089 / LMG 22485 / NCIMB 9086 / R18194 / 383).